A 303-amino-acid chain; its full sequence is MSSEPSASGKCVLYTTKGELQIELWAKECPKTVRSFLQSIQDGKWDGIVLGKVAEDAVWAPAGLCACSAEINGRLRFNRRGLVGMAPGQDQPFFTLASRGELDGRAVVFGTLVGQSVYRLMEIAQGEVGDDGKTFVYPAEVRRAEVTIPYFDGLSGQKRRAEPEQQAAPRPRKIATRVRLEYEESEDEASDPPLDVRIRAAHDILQDERLTDALHGDSPPPRPAEAPRGSDSAPCVASPDRRAEAAPPTDGPPSRCASLAGPAPASPGPVTDLAPQLSAREQGTLSSLAEFRCKRGGKNPLLG.

Residues 7–153 (ASGKCVLYTT…AEVTIPYFDG (147 aa)) form the PPIase cyclophilin-type domain. Disordered stretches follow at residues 155–195 (SGQK…PPLD) and 208–274 (ERLT…TDLA).

It belongs to the cyclophilin-type PPIase family. CWC27 subfamily. In terms of assembly, associated with the spliceosome.

Its subcellular location is the cytoplasm. The protein localises to the nucleus. It carries out the reaction [protein]-peptidylproline (omega=180) = [protein]-peptidylproline (omega=0). In terms of biological role, PPIases accelerate the folding of proteins. It catalyzes the cis-trans isomerization of proline imidic peptide bonds in oligopeptides. Involved in pre-mRNA splicing. The protein is Peptidyl-prolyl isomerase CWC27 (CWC27) of Eremothecium gossypii (strain ATCC 10895 / CBS 109.51 / FGSC 9923 / NRRL Y-1056) (Yeast).